Reading from the N-terminus, the 213-residue chain is Orotate phosphoribosyltransferase (213 aa).

5-phospho-alpha-D-ribose 1-diphosphate is bound at residue Lys-26. 34–35 (FF) contacts orotate. 5-phospho-alpha-D-ribose 1-diphosphate is bound by residues 72–73 (YK), Arg-99, Lys-100, Lys-103, His-105, and 124–132 (DDVITAGTA). Orotate is bound by residues Thr-128 and Arg-156.

The protein belongs to the purine/pyrimidine phosphoribosyltransferase family. PyrE subfamily. In terms of assembly, homodimer. It depends on Mg(2+) as a cofactor.

It carries out the reaction orotidine 5'-phosphate + diphosphate = orotate + 5-phospho-alpha-D-ribose 1-diphosphate. The protein operates within pyrimidine metabolism; UMP biosynthesis via de novo pathway; UMP from orotate: step 1/2. Functionally, catalyzes the transfer of a ribosyl phosphate group from 5-phosphoribose 1-diphosphate to orotate, leading to the formation of orotidine monophosphate (OMP). This chain is Orotate phosphoribosyltransferase, found in Pseudomonas paraeruginosa (strain DSM 24068 / PA7) (Pseudomonas aeruginosa (strain PA7)).